A 398-amino-acid polypeptide reads, in one-letter code: tRNA-specific 2-thiouridylase MnmA (398 aa).

ATP-binding positions include 20 to 27 (AMSGGVDS) and Leu-46. Cys-114 acts as the Nucleophile in catalysis. An intrachain disulfide couples Cys-114 to Cys-210. Gly-138 lines the ATP pocket. Residues 160 to 162 (RDQ) are interaction with tRNA. Cys-210 serves as the catalytic Cysteine persulfide intermediate.

Belongs to the MnmA/TRMU family.

It localises to the cytoplasm. The catalysed reaction is S-sulfanyl-L-cysteinyl-[protein] + uridine(34) in tRNA + AH2 + ATP = 2-thiouridine(34) in tRNA + L-cysteinyl-[protein] + A + AMP + diphosphate + H(+). Its function is as follows. Catalyzes the 2-thiolation of uridine at the wobble position (U34) of tRNA, leading to the formation of s(2)U34. The polypeptide is tRNA-specific 2-thiouridylase MnmA (Brucella canis (strain ATCC 23365 / NCTC 10854 / RM-666)).